A 394-amino-acid polypeptide reads, in one-letter code: Carbamoyl phosphate synthase small chain (394 aa).

Positions 1 to 188 are CPSase; that stretch reads MIRKERAILA…ALPYAFPTLR (188 aa). Residues Ser-49, Gly-240, and Gly-242 each coordinate L-glutamine. Residues 192–379 form the Glutamine amidotransferase type-1 domain; that stretch reads RVVLMDFGIK…IEEIDAFDGG (188 aa). The Nucleophile role is filled by Cys-267. Residues Leu-268, Gln-271, Asn-309, Gly-311, and Tyr-312 each coordinate L-glutamine. Catalysis depends on residues His-352 and Glu-354.

This sequence belongs to the CarA family. In terms of assembly, composed of two chains; the small (or glutamine) chain promotes the hydrolysis of glutamine to ammonia, which is used by the large (or ammonia) chain to synthesize carbamoyl phosphate. Tetramer of heterodimers (alpha,beta)4.

The enzyme catalyses hydrogencarbonate + L-glutamine + 2 ATP + H2O = carbamoyl phosphate + L-glutamate + 2 ADP + phosphate + 2 H(+). It carries out the reaction L-glutamine + H2O = L-glutamate + NH4(+). It functions in the pathway amino-acid biosynthesis; L-arginine biosynthesis; carbamoyl phosphate from bicarbonate: step 1/1. It participates in pyrimidine metabolism; UMP biosynthesis via de novo pathway; (S)-dihydroorotate from bicarbonate: step 1/3. Functionally, small subunit of the glutamine-dependent carbamoyl phosphate synthetase (CPSase). CPSase catalyzes the formation of carbamoyl phosphate from the ammonia moiety of glutamine, carbonate, and phosphate donated by ATP, constituting the first step of 2 biosynthetic pathways, one leading to arginine and/or urea and the other to pyrimidine nucleotides. The small subunit (glutamine amidotransferase) binds and cleaves glutamine to supply the large subunit with the substrate ammonia. This chain is Carbamoyl phosphate synthase small chain, found in Deinococcus radiodurans (strain ATCC 13939 / DSM 20539 / JCM 16871 / CCUG 27074 / LMG 4051 / NBRC 15346 / NCIMB 9279 / VKM B-1422 / R1).